A 231-amino-acid chain; its full sequence is MTHSVSPIGYIRSCFMEKFAIPRQPLLAPAARGTLELLPPFDQVEALEGLEQVSHVWLLFLFHQALEDKPRLKVRPPRLGGNRSLGVFATRATHRPNGIGQSVVRLEGFEAGRLWLSGIDLLDGTPVLDIKPYVPYADAVADARNGIADAPPPGIAVEWSEQARRQAHEHGQRLRQPVAELIEQCLAQDPRPAYQKPEPGRRYGVRLWDLDVHWHYPRPDLIRVLDVAGGD.

Residues 5–142 (VSPIGYIRSC…YVPYADAVAD (138 aa)) enclose the TsaA-like domain. Residues 22–24 (PRQ), 63–64 (HQ), Arg-91, and 122–125 (LDGT) each bind S-adenosyl-L-methionine.

The protein belongs to the tRNA methyltransferase O family.

The polypeptide is Putative S-adenosylmethionine-dependent methyltransferase RcsF (rcsF) (Pseudomonas aeruginosa (strain ATCC 15692 / DSM 22644 / CIP 104116 / JCM 14847 / LMG 12228 / 1C / PRS 101 / PAO1)).